We begin with the raw amino-acid sequence, 1307 residues long: tRNA(adenine(34)) deaminase, chloroplastic (1307 aa).

A chloroplast-targeting transit peptide spans 1–55; the sequence is MFNTYTNSLQWPIRSRNQQDYCSLLPERSESYKLSKAYTSSRCYCVSSRSSCCCC. 7 disordered regions span residues 245–377, 439–458, 544–563, 576–618, 753–807, 837–957, and 975–1073; these read EYIG…ESTG, SSEDRVSEMRRRTKYSSSQE, HNPLQTTQSDRTSVSVSHTS, EKRL…GQTT, GVIN…ATEG, SRAG…EEGG, and LPSR…SVSA. Residues 267–278 are compositionally biased toward low complexity; it reads SSCSSYYSLASS. The stretch at 280-309 forms a coiled coil; that stretch reads EFESDTEDQEEDVEIYRENVRSSEKKVVDQ. Over residues 281 to 292 the composition is skewed to acidic residues; it reads FESDTEDQEEDV. Residues 293-321 are compositionally biased toward basic and acidic residues; the sequence is EIYRENVRSSEKKVVDQSAKRLKSRKEAS. Over residues 367–377 the composition is skewed to polar residues; the sequence is QTENRVSESTG. Over residues 439–448 the composition is skewed to basic and acidic residues; it reads SSEDRVSEMR. Polar residues-rich tracts occupy residues 546–563 and 582–591; these read PLQTTQSDRTSVSVSHTS and QGSTTAVQSD. Basic and acidic residues-rich tracts occupy residues 592-615 and 760-771; these read SKVEKNGAQKEDSRLDHANSKKDG and EEQRAESNQLKR. Polar residues predominate over residues 852–863; the sequence is SSPNESVSSATW. The segment covering 866 to 883 has biased composition (basic and acidic residues); sequence GREHDGSSDDNTKGDKVL. Polar residues-rich tracts occupy residues 895–907, 924–947, and 1045–1073; these read VGQTSPRSQSEYP, SSPSSTILEGGSVSNRMSSTSGNQ, and SGSSSLREQVEQQQPLSAKSQEETGSVSA. The region spanning 1108-1230 is the CMP/dCMP-type deaminase domain; that stretch reads TVDEIFMREA…RLFPGGEGNG (123 aa). Zn(2+) is bound at residue His-1159. The Proton donor role is filled by Glu-1161. Positions 1189 and 1192 each coordinate Zn(2+). A disordered region spans residues 1268–1293; the sequence is QLRRKKKDKNSDPPTPTDHHHHHLPK.

Belongs to the cytidine and deoxycytidylate deaminase family. In terms of assembly, homodimer. Zn(2+) serves as cofactor.

It localises to the plastid. It is found in the chloroplast. The enzyme catalyses adenosine(34) in tRNA + H2O + H(+) = inosine(34) in tRNA + NH4(+). In terms of biological role, deaminates adenosines to inosines in tRNA-Arg(ACG). Exclusively involved in A-to-I editing of the prokaryote-type chloroplast-tRNA and not involved in C-to-U editing. The polypeptide is tRNA(adenine(34)) deaminase, chloroplastic (TADA) (Arabidopsis thaliana (Mouse-ear cress)).